Consider the following 315-residue polypeptide: tRNA-cytidine(32) 2-sulfurtransferase (315 aa).

A PP-loop motif motif is present at residues 39-44 (SGGKDS). Positions 114, 117, and 205 each coordinate [4Fe-4S] cluster.

It belongs to the TtcA family. Homodimer. Mg(2+) serves as cofactor. It depends on [4Fe-4S] cluster as a cofactor.

Its subcellular location is the cytoplasm. The catalysed reaction is cytidine(32) in tRNA + S-sulfanyl-L-cysteinyl-[cysteine desulfurase] + AH2 + ATP = 2-thiocytidine(32) in tRNA + L-cysteinyl-[cysteine desulfurase] + A + AMP + diphosphate + H(+). It functions in the pathway tRNA modification. In terms of biological role, catalyzes the ATP-dependent 2-thiolation of cytidine in position 32 of tRNA, to form 2-thiocytidine (s(2)C32). The sulfur atoms are provided by the cysteine/cysteine desulfurase (IscS) system. The sequence is that of tRNA-cytidine(32) 2-sulfurtransferase from Ralstonia pickettii (strain 12J).